Consider the following 309-residue polypeptide: 5-oxoprolinase subunit C (309 aa).

The protein belongs to the PxpC family. As to quaternary structure, forms a complex composed of PxpA, PxpB and PxpC.

The enzyme catalyses 5-oxo-L-proline + ATP + 2 H2O = L-glutamate + ADP + phosphate + H(+). Functionally, catalyzes the cleavage of 5-oxoproline to form L-glutamate coupled to the hydrolysis of ATP to ADP and inorganic phosphate. The protein is 5-oxoprolinase subunit C of Haemophilus influenzae (strain ATCC 51907 / DSM 11121 / KW20 / Rd).